The primary structure comprises 22 residues: Cysteine-rich venom protein collettin-a (22 aa).

The span at 1–15 (SNKKNYQKEIVDKHN) shows a compositional bias: basic and acidic residues. The disordered stretch occupies residues 1–22 (SNKKNYQKEIVDKHNALRRSVK).

It belongs to the CRISP family. In terms of processing, contains 8 disulfide bonds. In terms of tissue distribution, expressed by the venom gland.

The protein resides in the secreted. The sequence is that of Cysteine-rich venom protein collettin-a from Pseudechis colletti (Collett's snake).